The sequence spans 402 residues: Multidrug resistance protein MdtH (402 aa).

Residues 1-12 (MSRVSQARNLGK) are Cytoplasmic-facing. A helical membrane pass occupies residues 13 to 33 (YFLLIDNMLVVLGFFVVFPLI). Residues 34 to 98 (SIRFVDQMGW…GFATMGIAHE (65 aa)) lie on the Periplasmic side of the membrane. The helical transmembrane segment at 99 to 116 (PWLLWFSCLLSGLGGTLF) threads the bilayer. Over 117 to 138 (DPPRSALVVKLIRPQQRGRFFS) the chain is Cytoplasmic. The chain crosses the membrane as a helical span at residues 139–159 (LLMMQDSAGAVIGALLGSWLL). Over 160 to 164 (QYDFR) the chain is Periplasmic. Residues 165–185 (LVCATGAVLFVLCAAFNAWLL) traverse the membrane as a helical segment. Over 186–213 (PAWKLSTVRTPVREGMTRVMRDKRFVTY) the chain is Cytoplasmic. A helical membrane pass occupies residues 214-234 (VLTLAGYYMLAVQVMLMLPIM). Residues 235–243 (VNDVAGAPS) are Periplasmic-facing. Residues 244 to 264 (AVKWMYAIEACLSLTLLYPIA) traverse the membrane as a helical segment. Residues 265-276 (RWSEKHFRLEHR) lie on the Cytoplasmic side of the membrane. The helical transmembrane segment at 277-297 (LMAGLLIMSLSMMPVGMVSGL) threads the bilayer. Residues 298-299 (QQ) lie on the Periplasmic side of the membrane. The helical transmembrane segment at 300–320 (LFTLICLFYIGSIIAEPARET) threads the bilayer. At 321–339 (LSASLADARARGSYMGFSR) the chain is on the cytoplasmic side. A helical transmembrane segment spans residues 340 to 360 (LGLAIGGAIGYIGGGWLFDLG). The Periplasmic segment spans residues 361–367 (KSAHQPE). The chain crosses the membrane as a helical span at residues 368–388 (LPWMMLGIIGIFTFLALGWQF). Over 389-402 (SQKRAARRLLERDA) the chain is Cytoplasmic.

It belongs to the major facilitator superfamily. DHA1 family. MdtH (TC 2.A.1.2.21) subfamily.

The protein localises to the cell inner membrane. Confers resistance to norfloxacin and enoxacin. The sequence is that of Multidrug resistance protein MdtH from Escherichia coli O139:H28 (strain E24377A / ETEC).